Consider the following 216-residue polypeptide: Octanoyltransferase (216 aa).

The BPL/LPL catalytic domain occupies 32–207 (PDSQDEIWLV…QLVKHLDYAE (176 aa)). Residues 71-78 (RGGQVTYH), 138-140 (SLG), and 151-153 (GLA) each bind substrate. Catalysis depends on Cys-169, which acts as the Acyl-thioester intermediate.

Belongs to the LipB family.

The protein resides in the cytoplasm. It catalyses the reaction octanoyl-[ACP] + L-lysyl-[protein] = N(6)-octanoyl-L-lysyl-[protein] + holo-[ACP] + H(+). It functions in the pathway protein modification; protein lipoylation via endogenous pathway; protein N(6)-(lipoyl)lysine from octanoyl-[acyl-carrier-protein]: step 1/2. In terms of biological role, catalyzes the transfer of endogenously produced octanoic acid from octanoyl-acyl-carrier-protein onto the lipoyl domains of lipoate-dependent enzymes. Lipoyl-ACP can also act as a substrate although octanoyl-ACP is likely to be the physiological substrate. This chain is Octanoyltransferase, found in Pseudomonas putida (strain ATCC 47054 / DSM 6125 / CFBP 8728 / NCIMB 11950 / KT2440).